Consider the following 298-residue polypeptide: Bifunctional protein FolD (298 aa).

Residues 165–167 (GRG), Ser-194, and Ile-235 each bind NADP(+).

Belongs to the tetrahydrofolate dehydrogenase/cyclohydrolase family. Homodimer.

The catalysed reaction is (6R)-5,10-methylene-5,6,7,8-tetrahydrofolate + NADP(+) = (6R)-5,10-methenyltetrahydrofolate + NADPH. It carries out the reaction (6R)-5,10-methenyltetrahydrofolate + H2O = (6R)-10-formyltetrahydrofolate + H(+). The protein operates within one-carbon metabolism; tetrahydrofolate interconversion. In terms of biological role, catalyzes the oxidation of 5,10-methylenetetrahydrofolate to 5,10-methenyltetrahydrofolate and then the hydrolysis of 5,10-methenyltetrahydrofolate to 10-formyltetrahydrofolate. This chain is Bifunctional protein FolD, found in Amoebophilus asiaticus (strain 5a2).